A 59-amino-acid polypeptide reads, in one-letter code: UPF0434 protein Sputw3181_2540 (59 aa).

It belongs to the UPF0434 family.

The chain is UPF0434 protein Sputw3181_2540 from Shewanella sp. (strain W3-18-1).